We begin with the raw amino-acid sequence, 674 residues long: Membrane-anchored lipid-binding protein LAM5 (674 aa).

2 disordered regions span residues 1–52 and 65–151; these read MSDV…LNTE and NQSA…GSPL. The Cytoplasmic segment spans residues 1–633; sequence MSDVDNWEPV…AEQQGLKVTM (633 aa). Positions 69–81 are enriched in basic and acidic residues; it reads ADEHPTEIKHDQS. Over residues 82–119 the composition is skewed to low complexity; sequence RTSSTSSFFSGMISSFKSNVPSPVSRSTTPTSPVSQPS. At Thr110 the chain carries Phosphothreonine. Residues Ser113 and Ser140 each carry the phosphoserine modification. Residue Thr143 is modified to Phosphothreonine. The residue at position 149 (Ser149) is a Phosphoserine. Residues 198 to 264 enclose the GRAM domain; the sequence is KDFHETFKSV…FEDVTFMEKT (67 aa). The span at 336-357 shows a compositional bias: acidic residues; the sequence is IDEENNDKDANDNDTNENDDEN. The segment at 336–380 is disordered; the sequence is IDEENNDKDANDNDTNENDDENISTNETTPNSTSSSPDKEKEKAY. The segment covering 358–371 has biased composition (low complexity); it reads ISTNETTPNSTSSS. One can recognise a VASt domain in the interval 409-582; it reads NEFVLKELPF…ILSKFIKNNV (174 aa). A helical membrane pass occupies residues 634 to 654; that stretch reads ETWLFLYLIVVVLLLFNLFYI. The Lumenal segment spans residues 655–674; the sequence is RSIAVSLHQLVKLQLVELKL.

Belongs to the YSP2 family.

The protein resides in the endoplasmic reticulum membrane. Its function is as follows. May be involved in sterol transfer between intracellular membranes. In Saccharomyces cerevisiae (strain ATCC 204508 / S288c) (Baker's yeast), this protein is Membrane-anchored lipid-binding protein LAM5.